The chain runs to 364 residues: Popeye domain-containing protein 2 (364 aa).

The N-linked (GlcNAc...) asparagine glycan is linked to asparagine 4. A run of 2 helical transmembrane segments spans residues leucine 37–leucine 57 and isoleucine 77–tyrosine 97. Residues alanine 276–serine 333 form a disordered region. Residues threonine 300 to proline 309 show a composition bias toward polar residues. Residue threonine 361 is modified to Phosphothreonine.

The protein belongs to the popeye family. In terms of tissue distribution, expressed predominantly in the heart and in the skeletal muscle.

The protein resides in the membrane. It is found in the cell membrane. It localises to the sarcolemma. In terms of biological role, important for the maintenance of cardiac function. Plays a regulatory function in heart rate dynamics mediated, at least in part, through cAMP-binding and, probably, by increasing cell surface expression of the potassium channel KCNK2 and enhancing current density. In Homo sapiens (Human), this protein is Popeye domain-containing protein 2 (POPDC2).